The chain runs to 320 residues: Protein PXR1 (320 aa).

The span at 1–11 (MGLAGPRKRTK) shows a compositional bias: basic residues. A disordered region spans residues 1–24 (MGLAGPRKRTKISHDPNNTAWSRS). Residues 15–24 (DPNNTAWSRS) are compositionally biased toward polar residues. Residues 25–79 (TSGYGHKIMSAQGWTPGSFLGASNAAHADHFTAGSAGHIRVILKDDNLGLGAKLR) enclose the G-patch domain. A disordered region spans residues 152 to 298 (GEEVQTPQIS…MGRQFTRGRH (147 aa)). Basic residues predominate over residues 169-182 (KRPKKARKKEKRRA). Basic and acidic residues-rich tracts occupy residues 203–214 (RKENKEKKKSSD), 243–256 (KDPE…HDDS), and 269–288 (QESR…EHRP).

The protein belongs to the PINX1 family.

The protein localises to the nucleus. It localises to the nucleolus. In terms of biological role, involved in rRNA-processing at A0, A1 and A2 sites and negatively regulates telomerase. This Ajellomyces capsulatus (strain NAm1 / WU24) (Darling's disease fungus) protein is Protein PXR1 (PXR1).